The sequence spans 333 residues: MKMDVSVRAAGCSDDLSSGEADVDPKLLELTADEEKCRSIRRQYRQLMYCVRQNREDIVSSANNSLTEALEEANVLFDGVSRTREAALDARFLVMASDLGKEKAKQLNSDMNFFNQLAFCDFLFLFVGLNWMEGDPDKLSDCDDSIALSFWKAIEKEATSWMVKAETFHFVFGSFKLERSAPKPRLEHQKKVRKMEENGNMPTKLQKLDLSSYPEATEKNVERILGLLQTYFRKYPDTPVSYFEFVIDPNSFSRTVENIFYVSFIVRDGFARIRLDEDRLPILEPMNVNQMGEGNDSSCHGRKQGVISLTLQEWKNIVAAFEISEAMITYSSY.

This sequence belongs to the NSE4 family. In terms of assembly, component of the SMC5-SMC6 complex which consists at least of SMC5, SMC6, NSMCE2, NSMCE1, NSMCE4A or EID3 and NSMCE3; EID3 seems to be a testis-specific subunit. NSMCE1, NSMCE4A or EID3 and NSMCE3 probably form a subcomplex that bridges the head domains of the SMC5:SMC6 heterodimer. Homodimer, and heterodimer with EID2. Interacts with the C-terminal region of CREBBP. As to expression, highly expressed in testis.

The protein localises to the nucleus. Its subcellular location is the cytoplasm. It localises to the chromosome. It is found in the telomere. Functionally, tissue-specific component of the SMC5-SMC6 complex, a complex involved in repair of DNA double-strand breaks by homologous recombination. The complex may promote sister chromatid homologous recombination by recruiting the SMC1-SMC3 cohesin complex to double-strand breaks. The complex is required for telomere maintenance via recombination and mediates sumoylation of shelterin complex (telosome) components. In terms of biological role, acts as a repressor of nuclear receptor-dependent transcription possibly by interfering with CREBBP-dependent coactivation. May function as a coinhibitor of other CREBBP/EP300-dependent transcription factors. This Homo sapiens (Human) protein is EP300-interacting inhibitor of differentiation 3.